The primary structure comprises 197 residues: Recombination protein RecR (197 aa).

The segment at Cys56–Cys71 adopts a C4-type zinc-finger fold. A Toprim domain is found at Arg79–Pro174.

It belongs to the RecR family.

Functionally, may play a role in DNA repair. It seems to be involved in an RecBC-independent recombinational process of DNA repair. It may act with RecF and RecO. This chain is Recombination protein RecR, found in Fusobacterium nucleatum subsp. nucleatum (strain ATCC 25586 / DSM 15643 / BCRC 10681 / CIP 101130 / JCM 8532 / KCTC 2640 / LMG 13131 / VPI 4355).